Here is a 207-residue protein sequence, read N- to C-terminus: N-(5'-phosphoribosyl)anthranilate isomerase (207 aa).

The protein belongs to the TrpF family.

It carries out the reaction N-(5-phospho-beta-D-ribosyl)anthranilate = 1-(2-carboxyphenylamino)-1-deoxy-D-ribulose 5-phosphate. Its pathway is amino-acid biosynthesis; L-tryptophan biosynthesis; L-tryptophan from chorismate: step 3/5. The sequence is that of N-(5'-phosphoribosyl)anthranilate isomerase from Staphylococcus epidermidis (strain ATCC 35984 / DSM 28319 / BCRC 17069 / CCUG 31568 / BM 3577 / RP62A).